The sequence spans 179 residues: Transcription factor NF-E4 (179 aa).

Position 43 is an N6-acetyllysine (Lys43). The disordered stretch occupies residues 100–179 (AMKATGPHNA…QLPSLHLSQG (80 aa)). Polar residues-rich tracts occupy residues 143 to 153 (LSQSNPPTRIS) and 163 to 179 (ALEQ…LSQG).

Component of the SSP (stage selector protein) complex, which appears to be a heteromer of TFCP2 and 2 copies of NFE4. Interacts with HDAC1 and PCAF. Isoform 2 interacts with TFCP2. In terms of processing, acetylation at Lys-43 prolongs the protein half-life by preventing ubiquitin-mediated degradation and reduces the interaction between NF-E4 and HDAC1, potentially maximizing the activating ability of the factor at the gamma-promoter. Ubiquitinated; leading to its degradation by the proteasome. Acetylation at Lys-43 prevents ubiquitination. As to expression, specifically expressed in fetal liver, cord blood and bone marrow. Also expressed in the K562 and HEL cell lines, which constitutively express the fetal globin genes.

It is found in the nucleus. Functionally, functions as part of the SSP (stage selector protein) complex, a complex that contributes to the preferential expression of the gamma-gene in fetal erythroid cells by facilitating the interaction of the gamma-globin genes with enhancer elements contained in the locus control region (LCR). The complex binds to the stage selector element (SSE) in the proximal gamma-globin promoter. In contrast, isoform 2 acts as a repressor of gamma-globin gene expression by preventing NFE2 and RNA polymerase II recruitment to the promoter. The polypeptide is Transcription factor NF-E4 (NFE4) (Homo sapiens (Human)).